We begin with the raw amino-acid sequence, 201 residues long: Protein CIMAP1C (201 aa).

Residues 171-186 (PAPTMSSRSGHTSPAR) form an STPGR repeat. The disordered stretch occupies residues 172–201 (APTMSSRSGHTSPARLLSPWASSTRPTYAR). The segment covering 191–201 (WASSTRPTYAR) has biased composition (polar residues).

This sequence belongs to the CIMAP family.

This Bos taurus (Bovine) protein is Protein CIMAP1C (CIMAP1C).